A 310-amino-acid polypeptide reads, in one-letter code: Cytochrome f (310 aa).

The first 23 residues, M1–A23, serve as a signal peptide directing secretion. The heme site is built by Y28, C48, C51, and H52. The chain crosses the membrane as a helical span at residues I277 to K297.

Belongs to the cytochrome f family. In terms of assembly, the 4 large subunits of the cytochrome b6-f complex are cytochrome b6, subunit IV (17 kDa polypeptide, PetD), cytochrome f and the Rieske protein, while the 4 small subunits are PetG, PetL, PetM and PetN. The complex functions as a dimer. Heme is required as a cofactor.

The protein localises to the cellular thylakoid membrane. Component of the cytochrome b6-f complex, which mediates electron transfer between photosystem II (PSII) and photosystem I (PSI), cyclic electron flow around PSI, and state transitions. In Prochlorococcus marinus (strain MIT 9313), this protein is Cytochrome f.